The chain runs to 605 residues: Sulfite reductase [NADPH] flavoprotein alpha-component (605 aa).

A Flavodoxin-like domain is found at 70–208 (LTIIYASQTG…PAAEWRVKAL (139 aa)). FMN-binding positions include 76–81 (SQTGNA), 123–126 (STHG), and 159–168 (LGDSSYEFFC). Residues 240 to 454 (QNPYEATLLT…VEENNNFKLP (215 aa)) enclose the FAD-binding FR-type domain. Residues Thr328, Gly362, 392–395 (RLYS), 410–412 (TVG), and 425–428 (GGAS) contribute to the FAD site. NADP(+) contacts are provided by residues 525–526 (SR), 531–535 (KVYVQ), and Asp567. FAD is bound at residue Tyr605.

The protein belongs to the NADPH-dependent sulphite reductase flavoprotein subunit CysJ family. This sequence in the N-terminal section; belongs to the flavodoxin family. It in the C-terminal section; belongs to the flavoprotein pyridine nucleotide cytochrome reductase family. In terms of assembly, alpha(8)-beta(8). The alpha component is a flavoprotein, the beta component is a hemoprotein. FAD serves as cofactor. FMN is required as a cofactor.

The catalysed reaction is hydrogen sulfide + 3 NADP(+) + 3 H2O = sulfite + 3 NADPH + 4 H(+). It participates in sulfur metabolism; hydrogen sulfide biosynthesis; hydrogen sulfide from sulfite (NADPH route): step 1/1. Functionally, component of the sulfite reductase complex that catalyzes the 6-electron reduction of sulfite to sulfide. This is one of several activities required for the biosynthesis of L-cysteine from sulfate. The flavoprotein component catalyzes the electron flow from NADPH -&gt; FAD -&gt; FMN to the hemoprotein component. The chain is Sulfite reductase [NADPH] flavoprotein alpha-component from Photobacterium profundum (strain SS9).